Reading from the N-terminus, the 89-residue chain is Small ribosomal subunit protein uS15 (89 aa).

Belongs to the universal ribosomal protein uS15 family. In terms of assembly, part of the 30S ribosomal subunit. Forms a bridge to the 50S subunit in the 70S ribosome, contacting the 23S rRNA.

Its function is as follows. One of the primary rRNA binding proteins, it binds directly to 16S rRNA where it helps nucleate assembly of the platform of the 30S subunit by binding and bridging several RNA helices of the 16S rRNA. In terms of biological role, forms an intersubunit bridge (bridge B4) with the 23S rRNA of the 50S subunit in the ribosome. This chain is Small ribosomal subunit protein uS15, found in Streptococcus gordonii (strain Challis / ATCC 35105 / BCRC 15272 / CH1 / DL1 / V288).